Reading from the N-terminus, the 213-residue chain is StAR-related lipid transfer protein 5 (213 aa).

One can recognise an START domain in the interval 1 to 213 (MDPSWATQES…LQKAVRKFHH (213 aa)).

In terms of tissue distribution, expressed in most tissues, with highest levels in liver and in kidney.

Functionally, may be involved in the intracellular transport of sterols or other lipids. May bind cholesterol or other sterols. This chain is StAR-related lipid transfer protein 5 (Stard5), found in Mus musculus (Mouse).